A 381-amino-acid chain; its full sequence is Metallophosphoesterase 1 (381 aa).

The helical transmembrane segment at 15–35 (LIFAFVSVFVFCEYVIYYLVI) threads the bilayer. The a divalent metal cation site is built by aspartate 59, aspartate 101, asparagine 139, histidine 234, histidine 288, and histidine 290. A helical membrane pass occupies residues 341–361 (TVLVVYCSSCLIIALITLIHL). The Di-lysine motif signature appears at 377-381 (KHKTL).

It belongs to the metallophosphoesterase superfamily. MPPE1 family. Requires Mn(2+) as cofactor.

Its subcellular location is the endoplasmic reticulum-Golgi intermediate compartment membrane. Its function is as follows. Metallophosphoesterase that catalyzes the removal of a side-chain ethanolamine-phosphate (EtNP) from the second mannose of the GPI-anchor protein intermediate. Participates in the glycan remodeling steps of GPI-anchor maturation to allow an efficient transport of GPI-anchor proteins from the endoplasmic reticulum to the Golgi. The polypeptide is Metallophosphoesterase 1 (Danio rerio (Zebrafish)).